Consider the following 1347-residue polypeptide: Protocadherin-11 X-linked (1347 aa).

The N-terminal stretch at 1–23 (MDLLSGTYIFAVLLACVVFHSGA) is a signal peptide. The Extracellular portion of the chain corresponds to 24 to 812 (QEKNYTIREE…VSSPTSDYVK (789 aa)). Cadherin domains lie at 26-139 (KNYT…APLF), 140-249 (PATV…HPVF), 250-355 (KETE…VPSI), 362-466 (NPVN…APVF), 467-570 (TQSF…SPVF), 571-673 (THNE…KPVF), and 677-795 (PSNC…APVT). 3 N-linked (GlcNAc...) asparagine glycosylation sites follow: Asn-27, Asn-48, and Asn-54. N-linked (GlcNAc...) asparagine glycosylation occurs at Asn-344. The N-linked (GlcNAc...) asparagine glycan is linked to Asn-553. A glycan (N-linked (GlcNAc...) asparagine) is linked at Asn-773. Residues 813 to 833 (ILVAAVAGTITVVVVIFITAV) traverse the membrane as a helical segment. The Cytoplasmic segment spans residues 834–1347 (VRCRQAPHLK…DSPIMEEHPL (514 aa)). 3 disordered regions span residues 1057–1091 (LPEG…GYPQ), 1097–1116 (RATP…ESTF), and 1326–1347 (FTPR…EHPL).

Expressed strongly in fetal brain and brain (cortex, amygdala, thalamus, substantia nigra, hippocampus, caudate nucleus and corpus callosum). Expressed at low level in testis.

The protein resides in the cell membrane. Its function is as follows. Potential calcium-dependent cell-adhesion protein. The polypeptide is Protocadherin-11 X-linked (PCDH11X) (Homo sapiens (Human)).